The chain runs to 299 residues: GTPase Era (299 aa).

In terms of domain architecture, Era-type G spans 5–172 (KSGFVSIIGR…IDVLKSFLPE (168 aa)). Residues 13 to 20 (GRPNVGKS) are G1. 13–20 (GRPNVGKS) contacts GTP. Residues 39–43 (QTTRN) form a G2 region. Residues 60 to 63 (DTPG) form a G3 region. Residues 60–64 (DTPGI) and 122–125 (NKID) contribute to the GTP site. Positions 122-125 (NKID) are G4. The segment at 151–153 (ISA) is G5. A KH type-2 domain is found at 203-280 (TSEEIPHAIG…YLELWVKVQR (78 aa)).

Belongs to the TRAFAC class TrmE-Era-EngA-EngB-Septin-like GTPase superfamily. Era GTPase family. As to quaternary structure, monomer.

The protein resides in the cytoplasm. Its subcellular location is the cell membrane. An essential GTPase that binds both GDP and GTP, with rapid nucleotide exchange. Plays a role in 16S rRNA processing and 30S ribosomal subunit biogenesis and possibly also in cell cycle regulation and energy metabolism. The chain is GTPase Era from Staphylococcus epidermidis (strain ATCC 35984 / DSM 28319 / BCRC 17069 / CCUG 31568 / BM 3577 / RP62A).